Here is a 691-residue protein sequence, read N- to C-terminus: Elongation factor G (691 aa).

The region spanning 8–282 (ERVRNIGIAA…AVVDYLPAPV (275 aa)) is the tr-type G domain. Residues 17–24 (AHIDAGKT), 81–85 (DTPGH), and 135–138 (NKMD) contribute to the GTP site.

It belongs to the TRAFAC class translation factor GTPase superfamily. Classic translation factor GTPase family. EF-G/EF-2 subfamily.

Its subcellular location is the cytoplasm. Catalyzes the GTP-dependent ribosomal translocation step during translation elongation. During this step, the ribosome changes from the pre-translocational (PRE) to the post-translocational (POST) state as the newly formed A-site-bound peptidyl-tRNA and P-site-bound deacylated tRNA move to the P and E sites, respectively. Catalyzes the coordinated movement of the two tRNA molecules, the mRNA and conformational changes in the ribosome. In Prochlorococcus marinus (strain MIT 9303), this protein is Elongation factor G.